A 265-amino-acid polypeptide reads, in one-letter code: 6-oxopurine nucleoside phosphorylase (265 aa).

Phosphate-binding positions include Ser-10, 49–50 (RH), and 82–83 (SA). Disulfide bonds link Cys-136/Cys-202 and Cys-162/Cys-190. Residue Met-187 coordinates substrate. Residue Thr-188 participates in phosphate binding. 211–213 (NYA) provides a ligand contact to substrate. A disulfide bond links Cys-254 and Cys-256.

It belongs to the PNP/MTAP phosphorylase family. MTAP subfamily. Homohexamer. Dimer of a homotrimer.

The enzyme catalyses a purine D-ribonucleoside + phosphate = a purine nucleobase + alpha-D-ribose 1-phosphate. The catalysed reaction is guanosine + phosphate = alpha-D-ribose 1-phosphate + guanine. It carries out the reaction inosine + phosphate = alpha-D-ribose 1-phosphate + hypoxanthine. Its pathway is purine metabolism; purine nucleoside salvage. Its function is as follows. Purine nucleoside phosphorylase which is highly specific for 6-oxopurine nucleosides. Cleaves guanosine or inosine to respective bases and sugar-1-phosphate molecules. Involved in purine salvage. This Pyrococcus furiosus (strain ATCC 43587 / DSM 3638 / JCM 8422 / Vc1) protein is 6-oxopurine nucleoside phosphorylase.